The chain runs to 301 residues: Bifunctional protein FolD (301 aa).

NADP(+)-binding positions include 166–168 (GKS), S191, and I232.

The protein belongs to the tetrahydrofolate dehydrogenase/cyclohydrolase family. Homodimer.

The enzyme catalyses (6R)-5,10-methylene-5,6,7,8-tetrahydrofolate + NADP(+) = (6R)-5,10-methenyltetrahydrofolate + NADPH. The catalysed reaction is (6R)-5,10-methenyltetrahydrofolate + H2O = (6R)-10-formyltetrahydrofolate + H(+). It participates in one-carbon metabolism; tetrahydrofolate interconversion. Functionally, catalyzes the oxidation of 5,10-methylenetetrahydrofolate to 5,10-methenyltetrahydrofolate and then the hydrolysis of 5,10-methenyltetrahydrofolate to 10-formyltetrahydrofolate. In Orientia tsutsugamushi (strain Boryong) (Rickettsia tsutsugamushi), this protein is Bifunctional protein FolD.